Here is a 399-residue protein sequence, read N- to C-terminus: MKKTIVLAYSGGLDTSAIIPWIKDNYNFDVVAFVADIGQSKKDLYKIKEKAIISGASDCYISDLKDIFVKKYVFPMLKTGAIYEGEYLLGTAIARPLIAKAQVDYAKKINAIGLCHGSTGKGNDQVRFELAYSALAPSLLVIAPWREWKFQSREDLLKYLKTKNIVTNVNKKKIYSRDENIFHVSTEGGILEDPWNPANEDCWFWTKSPLNAPNKPKKISLKIEKGCVVSINNKFFNEFNCLKRLNKIGAKHSIGRIDIVENRLIGMKSRGCYETPGGTIIYKALRSLEQLVFDRECMYWKNKIALQLSSIIYDGKWFTPIRKSLQKSSDILSSSISGKVVVELYKGSVRILQKKSLNSLYSKKYVTFGKDNVYNQIDAKGFIRLFSLSSRIRALKNKK.

ATP-binding positions include 8–16 (AYSGGLDTS) and Ala35. Tyr87 lines the L-citrulline pocket. Residue Gly117 coordinates ATP. Positions 119, 123, and 124 each coordinate L-aspartate. Asn123 serves as a coordination point for L-citrulline. Positions 127, 176, 185, 261, and 273 each coordinate L-citrulline.

The protein belongs to the argininosuccinate synthase family. Type 1 subfamily. As to quaternary structure, homotetramer.

It localises to the cytoplasm. It carries out the reaction L-citrulline + L-aspartate + ATP = 2-(N(omega)-L-arginino)succinate + AMP + diphosphate + H(+). The protein operates within amino-acid biosynthesis; L-arginine biosynthesis; L-arginine from L-ornithine and carbamoyl phosphate: step 2/3. This chain is Argininosuccinate synthase, found in Buchnera aphidicola subsp. Cinara cedri (strain Cc).